A 326-amino-acid chain; its full sequence is Eukaryotic translation initiation factor 2 subunit 1 (326 aa).

The region spanning 24-95 (DDLIMVKVNR…QKGYIDLSKR (72 aa)) is the S1 motif domain. Ser-59 bears the Phosphoserine; by eIK1, eIK2 and PK4 mark. The segment at 291–326 (LDKHDGLSSDDEYSSDGDEDDSSNDDDNSSDEDDDD) is disordered. Over residues 298 to 326 (SSDDEYSSDGDEDDSSNDDDNSSDEDDDD) the composition is skewed to acidic residues.

It belongs to the eIF-2-alpha family. Phosphorylates at Ser-59 in mature trophozoites, schizonts and gametocytes but not in rings and young trophozoites. Phosphorylates at Ser-59 by eIK2 in salivary gland sporozoites but not in midgut and hemocoel sporozoites. Dephosphorylated at Ser-59 by UIS2. Phosphorylation of eIF2alpha subunit of the pre-initiation complex eIF2 inhibits recycling of inactive eIF2-GDP to active eIF2-GTP by limiting the activity of the guanine nucleotide exchange factor eIF2B and thus, inhibits protein translation.

The protein localises to the cytoplasm. It localises to the stress granule. Its function is as follows. Functions in the early steps of protein synthesis by forming a ternary complex with GTP and initiator tRNA. May regulate protein translation in response to amino acid starvation. May regulate protein at various stages of parasite development. This is Eukaryotic translation initiation factor 2 subunit 1 from Plasmodium berghei (strain Anka).